The following is a 454-amino-acid chain: Bifunctional protein GlmU (454 aa).

Residues M1–R226 form a pyrophosphorylase region. Residues L8–G11, K22, Q73, G78–T79, Y99–D101, G136, E151, N166, and N224 each bind UDP-N-acetyl-alpha-D-glucosamine. Mg(2+) is bound at residue D101. N224 provides a ligand contact to Mg(2+). The linker stretch occupies residues M227–Q247. Positions G248 to K454 are N-acetyltransferase. UDP-N-acetyl-alpha-D-glucosamine is bound by residues R330 and K348. The active-site Proton acceptor is the H360. Y363 and N374 together coordinate UDP-N-acetyl-alpha-D-glucosamine. Acetyl-CoA contacts are provided by residues A377, N383–Y384, S402, A420, and R437.

This sequence in the N-terminal section; belongs to the N-acetylglucosamine-1-phosphate uridyltransferase family. The protein in the C-terminal section; belongs to the transferase hexapeptide repeat family. Homotrimer. Requires Mg(2+) as cofactor.

The protein resides in the cytoplasm. The enzyme catalyses alpha-D-glucosamine 1-phosphate + acetyl-CoA = N-acetyl-alpha-D-glucosamine 1-phosphate + CoA + H(+). It catalyses the reaction N-acetyl-alpha-D-glucosamine 1-phosphate + UTP + H(+) = UDP-N-acetyl-alpha-D-glucosamine + diphosphate. It functions in the pathway nucleotide-sugar biosynthesis; UDP-N-acetyl-alpha-D-glucosamine biosynthesis; N-acetyl-alpha-D-glucosamine 1-phosphate from alpha-D-glucosamine 6-phosphate (route II): step 2/2. The protein operates within nucleotide-sugar biosynthesis; UDP-N-acetyl-alpha-D-glucosamine biosynthesis; UDP-N-acetyl-alpha-D-glucosamine from N-acetyl-alpha-D-glucosamine 1-phosphate: step 1/1. It participates in bacterial outer membrane biogenesis; LPS lipid A biosynthesis. Catalyzes the last two sequential reactions in the de novo biosynthetic pathway for UDP-N-acetylglucosamine (UDP-GlcNAc). The C-terminal domain catalyzes the transfer of acetyl group from acetyl coenzyme A to glucosamine-1-phosphate (GlcN-1-P) to produce N-acetylglucosamine-1-phosphate (GlcNAc-1-P), which is converted into UDP-GlcNAc by the transfer of uridine 5-monophosphate (from uridine 5-triphosphate), a reaction catalyzed by the N-terminal domain. The sequence is that of Bifunctional protein GlmU from Pseudomonas aeruginosa (strain LESB58).